A 166-amino-acid chain; its full sequence is Probable chemoreceptor glutamine deamidase CheD (166 aa).

It belongs to the CheD family.

The enzyme catalyses L-glutaminyl-[protein] + H2O = L-glutamyl-[protein] + NH4(+). In terms of biological role, probably deamidates glutamine residues to glutamate on methyl-accepting chemotaxis receptors (MCPs), playing an important role in chemotaxis. The polypeptide is Probable chemoreceptor glutamine deamidase CheD (Desulforamulus reducens (strain ATCC BAA-1160 / DSM 100696 / MI-1) (Desulfotomaculum reducens)).